A 366-amino-acid polypeptide reads, in one-letter code: NADP-dependent isopropanol dehydrogenase (366 aa).

Residues Cys-43, His-65, Glu-66, and Asp-156 each contribute to the Zn(2+) site. Residues 181-184 (IGPV), 204-206 (GSR), Tyr-224, 271-273 (VNY), and Lys-346 contribute to the NADP(+) site.

Belongs to the zinc-containing alcohol dehydrogenase family. As to quaternary structure, homodimer. The cofactor is Zn(2+).

The protein localises to the cytoplasm. It catalyses the reaction propan-2-ol + NADP(+) = acetone + NADPH + H(+). Its function is as follows. Alcohol dehydrogenase with a preference for medium chain secondary alcohols, such as 2-butanol and isopropanol. Has very low activity with primary alcohols, such as ethanol. Under physiological conditions, the enzyme reduces aldehydes and 2-ketones to produce secondary alcohols. Is also active with acetaldehyde and propionaldehyde. In Entamoeba histolytica (strain ATCC 30459 / HM-1:IMSS / ABRM), this protein is NADP-dependent isopropanol dehydrogenase.